A 425-amino-acid chain; its full sequence is D-amino acid dehydrogenase 2 (425 aa).

3–17 is an FAD binding site; that stretch reads ITVVGAGIVGISTAY.

The protein belongs to the DadA oxidoreductase family. It depends on FAD as a cofactor.

The catalysed reaction is a D-alpha-amino acid + A + H2O = a 2-oxocarboxylate + AH2 + NH4(+). Oxidative deamination of D-amino acids. This Ralstonia nicotianae (strain ATCC BAA-1114 / GMI1000) (Ralstonia solanacearum) protein is D-amino acid dehydrogenase 2 (dadA2).